The primary structure comprises 165 residues: Sporulation thiol-disulfide oxidoreductase A (165 aa).

A signal peptide spans 1-26 (MLTKRLLTIYIMLLGLIAWFPGAAQA). The Thioredoxin domain maps to 27 to 165 (EEKQPAVPAV…AEQLKEWTEE (139 aa)). Residues C65 and C68 are joined by a disulfide bond.

It belongs to the thioredoxin family.

It is found in the spore outer membrane. Its function is as follows. Thiol-disulfide oxidoreductase with a reductive function, involved in spore cortex synthesis. It could be involved either in breaking disulfide bonds in cortex components or in proteins that are important for cortex synthesis, or in thiol/disulfide bond interchange. The protein is Sporulation thiol-disulfide oxidoreductase A (stoA) of Bacillus subtilis (strain 168).